Here is a 277-residue protein sequence, read N- to C-terminus: Tryptophan synthase alpha chain (277 aa).

Active-site proton acceptor residues include glutamate 43 and glutamate 54.

Belongs to the TrpA family. In terms of assembly, tetramer of two alpha and two beta chains.

It catalyses the reaction (1S,2R)-1-C-(indol-3-yl)glycerol 3-phosphate + L-serine = D-glyceraldehyde 3-phosphate + L-tryptophan + H2O. Its pathway is amino-acid biosynthesis; L-tryptophan biosynthesis; L-tryptophan from chorismate: step 5/5. The alpha subunit is responsible for the aldol cleavage of indoleglycerol phosphate to indole and glyceraldehyde 3-phosphate. This Haloferax volcanii (strain ATCC 29605 / DSM 3757 / JCM 8879 / NBRC 14742 / NCIMB 2012 / VKM B-1768 / DS2) (Halobacterium volcanii) protein is Tryptophan synthase alpha chain.